The primary structure comprises 303 residues: Protoporphyrin uptake protein 1 (303 aa).

Residues 1–18 (MSTTDSGFVLYHYTPSKA) are Extracellular-facing. The chain crosses the membrane as a helical span at residues 19–39 (AAIVFVVLFIIMTVIFAVQTL). The Cytoplasmic segment spans residues 40–76 (YAARKSSKALKNNPFESSDDKVDSLEDAEYKQLKITP). A helical membrane pass occupies residues 77–97 (TVFAFIPFFTGCIMEAVGYIG). At 98–111 (RALSSSNPERTTPY) the chain is on the extracellular side. Residues 112 to 132 (IIQSVLLLVAPALIAATIYMI) form a helical membrane-spanning segment. The Cytoplasmic segment spans residues 133-154 (FGRLLHVMRCQSLILISARFGT). Residues 155 to 175 (TFFVVGDVFSFFLQAAGGGLM) traverse the membrane as a helical segment. The Extracellular portion of the chain corresponds to 176–183 (SKAGSTKT). The helical transmembrane segment at 184–204 (GSGLITAGLFVQVIFFGFFII) threads the bilayer. At 205–226 (NEIRFTVNVKRRCLFYEDISRK) the chain is on the cytoplasmic side. Residues 227–247 (WIFVNATLLLSSMLILLRSIV) traverse the membrane as a helical segment. The Extracellular portion of the chain corresponds to 248–264 (RIVEFIQGFNGYIISHE). Residues 265-285 (YFIYVFDAVPMLLVIIAFSVG) traverse the membrane as a helical segment. The Cytoplasmic segment spans residues 286 to 303 (SFFGNVFDVIKECQTLSN).

The protein belongs to the lipid-translocating exporter (LTE) (TC 9.A.26.1) family. Post-translationally, N-glycosylated.

It is found in the cell membrane. Functionally, involved in inducible protoporphyrin IX influx and heme efflux. The polypeptide is Protoporphyrin uptake protein 1 (PUG1) (Saccharomyces cerevisiae (strain ATCC 204508 / S288c) (Baker's yeast)).